Reading from the N-terminus, the 1859-residue chain is Retinitis pigmentosa 1-like 1 protein (1859 aa).

Disordered stretches follow at residues 1-22 and 115-154; these read MNST…PSHR and RKPP…YSWK. The Doublecortin 1 domain maps to 42 to 126; the sequence is KKITFLKRGD…PPKTSREPGR (85 aa). A compositionally biased stretch (basic and acidic residues) spans 115–126; sequence RKPPKTSREPGR. The span at 130–139 shows a compositional bias: polar residues; the sequence is KSPSAGQAQV. The Doublecortin 2 domain occupies 160-239; that stretch reads RRLTLVKNGD…NEAFRCLEME (80 aa). 10 disordered regions span residues 263-301, 426-445, 457-593, 700-750, 868-920, 952-997, 1152-1211, 1227-1255, 1298-1350, and 1567-1859; these read PNAK…SGHR, IWRN…RRRW, WRQE…TQSH, MPQE…TSKA, CFGR…TPSA, NTEV…GVLS, TEDF…YPEL, ATGG…STML, GSQD…RVRE, and LQSK…DLDF. A compositionally biased stretch (basic and acidic residues) spans 457–472; sequence WRQEANHRKGHDKDNL. Composition is skewed to polar residues over residues 499–512 and 535–551; these read GSDT…ASSH and PETQ…SVSA. The span at 716–728 shows a compositional bias: low complexity; the sequence is SPSNSPSAGNQAS. The segment covering 734-750 has biased composition (polar residues); the sequence is PFSSSLDLQEPQATSKA. Low complexity predominate over residues 870 to 883; the sequence is GRESASNGSTSSGH. 3 stretches are compositionally biased toward polar residues: residues 1241–1252, 1336–1345, and 1567–1577; these read TWGNAPEQSVHS, ESPQHFSESN, and LQSKKGGSSNR. The segment covering 1616–1632 has biased composition (basic and acidic residues); sequence GEGKQRLRAEEDPEILK. Over residues 1641 to 1652 the composition is skewed to acidic residues; it reads PEEDEATEEDGE. Residues 1700-1720 show a composition bias toward basic and acidic residues; it reads EASRERQQEVEGRHQDVKEDS. Polar residues predominate over residues 1756–1778; that stretch reads SHHTACSSRALSLDNSSQVSQKG.

In terms of assembly, interacts with RP1; has a synergistic effect with RP1 in photoreceptor differentiation. As to expression, retinal-specific; expressed in photoreceptor.

It is found in the cytoplasm. The protein resides in the cytoskeleton. It localises to the cilium axoneme. The protein localises to the cell projection. Its subcellular location is the cilium. It is found in the photoreceptor outer segment. Functionally, required for the differentiation of photoreceptor cells. Plays a role in the organization of outer segment of rod and cone photoreceptors. The sequence is that of Retinitis pigmentosa 1-like 1 protein (Rp1l1) from Mus musculus (Mouse).